The following is an 863-amino-acid chain: Alanine--tRNA ligase (863 aa).

4 residues coordinate Zn(2+): His552, His556, Cys656, and His660.

The protein belongs to the class-II aminoacyl-tRNA synthetase family. It depends on Zn(2+) as a cofactor.

It localises to the cytoplasm. The enzyme catalyses tRNA(Ala) + L-alanine + ATP = L-alanyl-tRNA(Ala) + AMP + diphosphate. In terms of biological role, catalyzes the attachment of alanine to tRNA(Ala) in a two-step reaction: alanine is first activated by ATP to form Ala-AMP and then transferred to the acceptor end of tRNA(Ala). Also edits incorrectly charged Ser-tRNA(Ala) and Gly-tRNA(Ala) via its editing domain. The protein is Alanine--tRNA ligase of Alcanivorax borkumensis (strain ATCC 700651 / DSM 11573 / NCIMB 13689 / SK2).